The following is a 192-amino-acid chain: NF-kappa-B inhibitor-interacting Ras-like protein 1 (192 aa).

The interval 1–192 (MGKGCKVVVC…KSKGTPSNDI (192 aa)) is small GTPase-like. 11–18 (GMASVGKT) serves as a coordination point for GTP. Residues 35–43 (TSDTQEDIY) carry the Effector region motif. Residues 61–65 (DTRGL) and 120–123 (NKCE) each bind GTP. Positions 169-192 (TQPQSKSAFPLPGRKSKGTPSNDI) are disordered.

It belongs to the small GTPase superfamily. Ras family. KappaB-Ras subfamily.

The protein localises to the cytoplasm. Functionally, atypical Ras-like protein that acts as a potent regulator of NF-kappa-B activity by preventing the degradation of NF-kappa-B inhibitor beta (NFKBIB) by most signals, explaining why NFKBIB is more resistant to degradation. This Danio rerio (Zebrafish) protein is NF-kappa-B inhibitor-interacting Ras-like protein 1 (nkiras1).